A 48-amino-acid polypeptide reads, in one-letter code: Putative protein P' (48 aa).

This chain is Putative protein P', found in Bos taurus (Bovine).